The chain runs to 638 residues: Chaperone protein HtpG (638 aa).

The a; substrate-binding stretch occupies residues Met-1–Arg-346. Positions Glu-347–Lys-563 are b. Residues Leu-564–Lys-638 form a c region.

This sequence belongs to the heat shock protein 90 family. In terms of assembly, homodimer.

It is found in the cytoplasm. Its function is as follows. Molecular chaperone. Has ATPase activity. In Shewanella pealeana (strain ATCC 700345 / ANG-SQ1), this protein is Chaperone protein HtpG.